The chain runs to 425 residues: Polyribonucleotide 5'-hydroxyl-kinase Clp1 (425 aa).

ATP contacts are provided by residues E22, K62, and 124 to 129 (DVGKST).

Belongs to the Clp1 family. Clp1 subfamily. Component of the tRNA splicing endonuclease complex. Component of pre-mRNA cleavage complex II (CF-II).

The protein resides in the nucleus. The catalysed reaction is a 5'-end dephospho-2'-deoxyribonucleoside-DNA + ATP = a 5'-end 5'-phospho-2'-deoxyribonucleoside-DNA + ADP + H(+). It carries out the reaction a 5'-end dephospho-ribonucleoside-RNA + ATP = a 5'-end 5'-phospho-ribonucleoside-RNA + ADP + H(+). Functionally, polynucleotide kinase that can phosphorylate the 5'-hydroxyl groups of double-stranded RNA (dsRNA), single-stranded RNA (ssRNA), double stranded DNA (dsDNA) and double-stranded DNA:RNA hybrids. dsRNA is phosphorylated more efficiently than dsDNA, and the RNA component of a DNA:RNA hybrid is phosphorylated more efficiently than the DNA component. Plays a role in both tRNA splicing and mRNA 3'-end formation. Component of the tRNA splicing endonuclease complex: phosphorylates the 5'-terminus of the tRNA 3'-exon during tRNA splicing; this phosphorylation event is a prerequisite for the subsequent ligation of the two exon halves and the production of a mature tRNA. Its role in tRNA splicing and maturation is required for cerebellar development. Component of the pre-mRNA cleavage complex II (CF-II), which seems to be required for mRNA 3'-end formation. Also phosphorylates the 5'-terminus of exogenously introduced short interfering RNAs (siRNAs), which is a necessary prerequisite for their incorporation into the RNA-induced silencing complex (RISC). However, endogenous siRNAs and microRNAs (miRNAs) that are produced by the cleavage of dsRNA precursors by dicer1 already contain a 5'-phosphate group, so this protein may be dispensible for normal RNA-mediated gene silencing. The polypeptide is Polyribonucleotide 5'-hydroxyl-kinase Clp1 (Gallus gallus (Chicken)).